The following is a 243-amino-acid chain: Vesicle-associated membrane protein-associated protein B (243 aa).

A2 bears the N-acetylalanine mark. The Cytoplasmic portion of the chain corresponds to 2-218 (AKVEQVLSLE…PAPATPGKEE (217 aa)). An MSP domain is found at 7–124 (VLSLEPQHEL…MDSKLRCVFE (118 aa)). The residue at position 146 (S146) is a Phosphoserine. K147 is covalently cross-linked (Glycyl lysine isopeptide (Lys-Gly) (interchain with G-Cter in SUMO1)). T150 is subject to Phosphothreonine. A phosphoserine mark is found at S158 and S159. Positions 161–196 (LDDTEVKKVMEECKRLQSEVQRLREENKQLKEEDGL) form a coiled coil. Residues 185–197 (EENKQLKEEDGLR) show a composition bias toward basic and acidic residues. The interval 185–217 (EENKQLKEEDGLRMRKPVLSNSPAPAPATPGKE) is disordered. S206 carries the post-translational modification Phosphoserine. The helical; Anchor for type IV membrane protein transmembrane segment at 219 to 239 (GLSTRLLALVVLFFIVGVIIG) threads the bilayer.

It belongs to the VAMP-associated protein (VAP) (TC 9.B.17) family. Homodimer, and heterodimer with VAPA. Interacts with VAMP1 and VAMP2. Interacts (via MSP domain) with ZFYVE27. Interacts with RMDN3. Interacts with KIF5A in a ZFYVE27-dependent manner. Interacts (via MSP domain) with STARD3 (via phospho-FFAT motif). Interacts with STARD3NL (via FFAT motif). Interacts with CERT1. Interacts with PLEKHA3 and SACM1L to form a ternary complex. Interacts with VPS13A (via FFAT motif). Interacts with RB1CC1 (via phosphorylated FFAT motif), MIGA2 (via phosphorylated FFAT motif), RMDN3 (via phosphorylated FFAT motif), OSBPL1A (via FFAT motif), KCNB1 (via phosphorylated FFAT motif) and KCNB2 (via phosphorylated FFAT motif). Interacts (via MSP domain) with WDR44 (via FFAT motif); the interactions connect the endoplasmic reticulum (ER) with the endosomal tubule.

Its subcellular location is the endoplasmic reticulum membrane. In terms of biological role, endoplasmic reticulum (ER)-anchored protein that mediates the formation of contact sites between the ER and endosomes via interaction with FFAT motif-containing proteins such as STARD3 or WDR44. Interacts with STARD3 in a FFAT motif phosphorylation dependent manner. Via interaction with WDR44 participates in neosynthesized protein export. Participates in the endoplasmic reticulum unfolded protein response (UPR) by inducing ERN1/IRE1 activity. Involved in cellular calcium homeostasis regulation. The protein is Vesicle-associated membrane protein-associated protein B of Sus scrofa (Pig).